A 644-amino-acid chain; its full sequence is Macrolide export ATP-binding/permease protein MacB (644 aa).

In terms of domain architecture, ABC transporter spans 4–242 (IECKNINRYF…SNVGRIREKA (239 aa)). Residue 40-47 (GQSGSGKS) coordinates ATP. 4 consecutive transmembrane segments (helical) span residues 270–290 (LLTM…VALG), 524–544 (IALI…LVSV), 574–594 (LICV…SLVF), and 607–627 (AMSV…FGFM).

This sequence belongs to the ABC transporter superfamily. Macrolide exporter (TC 3.A.1.122) family. Homodimer.

The protein resides in the cell inner membrane. Functionally, non-canonical ABC transporter that contains transmembrane domains (TMD), which form a pore in the inner membrane, and an ATP-binding domain (NBD), which is responsible for energy generation. Confers resistance against macrolides. The chain is Macrolide export ATP-binding/permease protein MacB from Neisseria meningitidis serogroup B (strain ATCC BAA-335 / MC58).